The sequence spans 448 residues: DNA repair protein RadA (448 aa).

Residues 10–27 (CSNCGNTSPKWSGQCFDC) form a C4-type zinc finger. ATP is bound at residue 91 to 98 (GDPGIGKS). The RadA KNRFG motif signature appears at 250 to 254 (KNRFG). The interval 349–448 (EVYLSIAGGL…KDLKLLLGSS (100 aa)) is lon-protease-like.

It belongs to the RecA family. RadA subfamily.

In terms of biological role, DNA-dependent ATPase involved in processing of recombination intermediates, plays a role in repairing DNA breaks. Stimulates the branch migration of RecA-mediated strand transfer reactions, allowing the 3' invading strand to extend heteroduplex DNA faster. Binds ssDNA in the presence of ADP but not other nucleotides, has ATPase activity that is stimulated by ssDNA and various branched DNA structures, but inhibited by SSB. Does not have RecA's homology-searching function. This is DNA repair protein RadA from Rickettsia bellii (strain RML369-C).